Consider the following 276-residue polypeptide: 2-dehydro-3-deoxyphosphooctonate aldolase (276 aa).

Belongs to the KdsA family.

The protein localises to the cytoplasm. The enzyme catalyses D-arabinose 5-phosphate + phosphoenolpyruvate + H2O = 3-deoxy-alpha-D-manno-2-octulosonate-8-phosphate + phosphate. The protein operates within carbohydrate biosynthesis; 3-deoxy-D-manno-octulosonate biosynthesis; 3-deoxy-D-manno-octulosonate from D-ribulose 5-phosphate: step 2/3. Its pathway is bacterial outer membrane biogenesis; lipopolysaccharide biosynthesis. This is 2-dehydro-3-deoxyphosphooctonate aldolase from Helicobacter pylori (strain Shi470).